We begin with the raw amino-acid sequence, 24 residues long: Neurotoxin 5 (24 aa).

An LCN-type CS-alpha/beta domain is found at 2-24 (RDAYIAQNYNCVYTCFKNDYCND).

This sequence belongs to the long (4 C-C) scorpion toxin superfamily. Sodium channel inhibitor family. Alpha subfamily. In terms of tissue distribution, expressed by the venom gland.

It localises to the secreted. Its function is as follows. Binds to sodium channels (Nav) and inhibits the inactivation of the activated channels, thereby blocking neuronal transmission. This chain is Neurotoxin 5, found in Buthus occitanus tunetanus (Common European scorpion).